Here is a 336-residue protein sequence, read N- to C-terminus: Ornithine carbamoyltransferase, catabolic (336 aa).

Residues 62-65 (STRT), glutamine 89, arginine 113, and 140-143 (HPTQ) each bind carbamoyl phosphate. Residues asparagine 172, aspartate 236, and 240 to 241 (SM) contribute to the L-ornithine site. Carbamoyl phosphate is bound by residues 277-278 (CL) and arginine 322.

This sequence belongs to the aspartate/ornithine carbamoyltransferase superfamily. OTCase family.

It is found in the cytoplasm. It catalyses the reaction carbamoyl phosphate + L-ornithine = L-citrulline + phosphate + H(+). It participates in amino-acid degradation; L-arginine degradation via ADI pathway; carbamoyl phosphate from L-arginine: step 2/2. Functionally, reversibly catalyzes the transfer of the carbamoyl group from carbamoyl phosphate (CP) to the N(epsilon) atom of ornithine (ORN) to produce L-citrulline. In Staphylococcus aureus (strain MSSA476), this protein is Ornithine carbamoyltransferase, catabolic.